The following is a 478-amino-acid chain: Aspartyl/glutamyl-tRNA(Asn/Gln) amidotransferase subunit B 2 (478 aa).

It belongs to the GatB/GatE family. GatB subfamily. As to quaternary structure, heterotrimer of A, B and C subunits.

It carries out the reaction L-glutamyl-tRNA(Gln) + L-glutamine + ATP + H2O = L-glutaminyl-tRNA(Gln) + L-glutamate + ADP + phosphate + H(+). The enzyme catalyses L-aspartyl-tRNA(Asn) + L-glutamine + ATP + H2O = L-asparaginyl-tRNA(Asn) + L-glutamate + ADP + phosphate + 2 H(+). Allows the formation of correctly charged Asn-tRNA(Asn) or Gln-tRNA(Gln) through the transamidation of misacylated Asp-tRNA(Asn) or Glu-tRNA(Gln) in organisms which lack either or both of asparaginyl-tRNA or glutaminyl-tRNA synthetases. The reaction takes place in the presence of glutamine and ATP through an activated phospho-Asp-tRNA(Asn) or phospho-Glu-tRNA(Gln). The sequence is that of Aspartyl/glutamyl-tRNA(Asn/Gln) amidotransferase subunit B 2 (gatB2) from Clostridium acetobutylicum (strain ATCC 824 / DSM 792 / JCM 1419 / IAM 19013 / LMG 5710 / NBRC 13948 / NRRL B-527 / VKM B-1787 / 2291 / W).